Reading from the N-terminus, the 62-residue chain is Large ribosomal subunit protein bL33 (62 aa).

This sequence belongs to the bacterial ribosomal protein bL33 family.

The chain is Large ribosomal subunit protein bL33 from Cyanothece sp. (strain PCC 7425 / ATCC 29141).